Consider the following 333-residue polypeptide: Adenosine deaminase (333 aa).

The Zn(2+) site is built by His12 and His14. Residues His14, Asp16, and Gly170 each coordinate substrate. His197 is a binding site for Zn(2+). Glu200 functions as the Proton donor in the catalytic mechanism. Asp278 contacts Zn(2+). Asp279 contacts substrate.

This sequence belongs to the metallo-dependent hydrolases superfamily. Adenosine and AMP deaminases family. Adenosine deaminase subfamily. It depends on Zn(2+) as a cofactor.

The catalysed reaction is adenosine + H2O + H(+) = inosine + NH4(+). It carries out the reaction 2'-deoxyadenosine + H2O + H(+) = 2'-deoxyinosine + NH4(+). In terms of biological role, catalyzes the hydrolytic deamination of adenosine and 2-deoxyadenosine. This Shigella flexneri serotype 5b (strain 8401) protein is Adenosine deaminase.